The chain runs to 110 residues: MNCIQRPETDRPAWFVYIVQCADGTLYTGITTNIARRITEHNSSAKGARYTRSRRPVMLVYRETCRDRSEASKREYAIKQLSPTRKRTLVKASEKGFSAIYFPSYSIKGQ.

The GIY-YIG domain maps to 12-88 (PAWFVYIVQC…KQLSPTRKRT (77 aa)).

It belongs to the UPF0213 family.

In Desulfotalea psychrophila (strain LSv54 / DSM 12343), this protein is UPF0213 protein DP2720.